We begin with the raw amino-acid sequence, 336 residues long: MKDRYILAFETSCDETSVAVLKNDDELLSNVIASQIESHKRFGGVVPEVASRHHVEVITACIEEALAEAGITEEDVTAVAVTYGPGLVGALLVGLSAAKAFAWAHGLPLIPVNHMAGHLMAAQSVEPLEFPLLALLVSGGHTELVYVSEAGDYKIVGETRDDAVGEAYDKVGRVMGLTYPAGREIDDLAHQGQDIYDFPRAMIKEDNLEFSFSGLKSAFINLHHNAEQKGESLSTEDLCASFQAAVMDILMAKTKKALEKYPVKTLVVAGGVAANKGLRERLAAEITDVKVIIPPLRLCGDNAGMIAYASVSEWNKENFAGWDLNAKPSLAFDTME.

2 residues coordinate Fe cation: His114 and His118. Residues 136-140, Asp169, Gly182, Asp186, and Asn275 each bind substrate; that span reads LVSGG. Asp301 provides a ligand contact to Fe cation.

It belongs to the KAE1 / TsaD family. Requires Fe(2+) as cofactor.

The protein resides in the cytoplasm. The enzyme catalyses L-threonylcarbamoyladenylate + adenosine(37) in tRNA = N(6)-L-threonylcarbamoyladenosine(37) in tRNA + AMP + H(+). Functionally, required for the formation of a threonylcarbamoyl group on adenosine at position 37 (t(6)A37) in tRNAs that read codons beginning with adenine. Is involved in the transfer of the threonylcarbamoyl moiety of threonylcarbamoyl-AMP (TC-AMP) to the N6 group of A37, together with TsaE and TsaB. TsaD likely plays a direct catalytic role in this reaction. This is tRNA N6-adenosine threonylcarbamoyltransferase from Streptococcus pneumoniae (strain P1031).